Consider the following 101-residue polypeptide: Small ribosomal subunit protein uS14 (101 aa).

The disordered stretch occupies residues 32–67 (SDAKRSDEEREAARLGLQKLPRNANPTRQRNRCEIT). Residues 33-44 (DAKRSDEEREAA) show a composition bias toward basic and acidic residues.

This sequence belongs to the universal ribosomal protein uS14 family. In terms of assembly, part of the 30S ribosomal subunit. Contacts proteins S3 and S10.

Functionally, binds 16S rRNA, required for the assembly of 30S particles and may also be responsible for determining the conformation of the 16S rRNA at the A site. In Paracidovorax citrulli (strain AAC00-1) (Acidovorax citrulli), this protein is Small ribosomal subunit protein uS14.